Reading from the N-terminus, the 248-residue chain is Proteasome subunit alpha type-7 (248 aa).

S130 carries an O-linked (GlcNAc) serine glycan. Residue Y153 is modified to Phosphotyrosine.

This sequence belongs to the peptidase T1A family. As to quaternary structure, the 26S proteasome consists of a 20S proteasome core and two 19S regulatory subunits. The 20S proteasome core is a barrel-shaped complex made of 28 subunits that are arranged in four stacked rings. The two outer rings are each formed by seven alpha subunits, and the two inner rings are formed by seven beta subunits. The proteolytic activity is exerted by three beta-subunits PSMB5, PSMB6 and PSMB7. PSMA7 interacts directly with the PSMG1-PSMG2 heterodimer which promotes 20S proteasome assembly. Interacts with HIF1A. Interacts with RAB7A. Interacts with PRKN. Interacts with ABL1 and ABL2. Interacts with EMAP2. Interacts with MAVS.

The protein resides in the cytoplasm. It localises to the nucleus. In terms of biological role, component of the 20S core proteasome complex involved in the proteolytic degradation of most intracellular proteins. This complex plays numerous essential roles within the cell by associating with different regulatory particles. Associated with two 19S regulatory particles, forms the 26S proteasome and thus participates in the ATP-dependent degradation of ubiquitinated proteins. The 26S proteasome plays a key role in the maintenance of protein homeostasis by removing misfolded or damaged proteins that could impair cellular functions, and by removing proteins whose functions are no longer required. Associated with the PA200 or PA28, the 20S proteasome mediates ubiquitin-independent protein degradation. This type of proteolysis is required in several pathways including spermatogenesis (20S-PA200 complex) or generation of a subset of MHC class I-presented antigenic peptides (20S-PA28 complex). Inhibits the transactivation function of HIF-1A under both normoxic and hypoxia-mimicking conditions. The interaction with EMAP2 increases the proteasome-mediated HIF-1A degradation under the hypoxic conditions. Plays a role in hepatitis C virus internal ribosome entry site-mediated translation. Mediates nuclear translocation of the androgen receptor (AR) and thereby enhances androgen-mediated transactivation. Promotes MAVS degradation and thereby negatively regulates MAVS-mediated innate immune response. This is Proteasome subunit alpha type-7 (PSMA7) from Pongo abelii (Sumatran orangutan).